We begin with the raw amino-acid sequence, 81 residues long: MQMKATILIVLVALFMIQQSEAGWLRKAAKSVGKFYYKHKYYIKAAWKIGRHALGDMTDEEFQDFMKEVEQAREEELQSRQ.

Residues 1–22 (MQMKATILIVLVALFMIQQSEA) form the signal peptide. Trp24 carries the post-translational modification 6'-bromotryptophan. Arg26 is modified (3,4-dihydroxyarginine). Lys27, Lys30, and Lys34 each carry 4,5-dihydroxylysine. A 3',4'-dihydroxyphenylalanine mark is found at Tyr36 and Tyr37. Lys38 is subject to 4,5-dihydroxylysine. Lys40 is subject to 5-hydroxylysine. Tyr41 and Tyr42 each carry 3',4'-dihydroxyphenylalanine. 5-hydroxylysine is present on Lys44. Leu54 carries the leucine amide modification. The propeptide at 56–81 (DMTDEEFQDFMKEVEQAREEELQSRQ) is removed in mature form.

In terms of processing, contains L-DOPA (3',4'-dihydroxyphenylalanine). As to expression, hemocytes and pharyngeal tissues.

It localises to the secreted. Its function is as follows. Bactericidal against several Gram-positive and Gram-negative bacteria. This is Styelin-E from Styela clava (Sea squirt).